A 544-amino-acid chain; its full sequence is Chaperonin GroEL (544 aa).

ATP-binding positions include 30–33 (TLGP), K51, 87–91 (DGTTT), G415, and D495.

Belongs to the chaperonin (HSP60) family. As to quaternary structure, forms a cylinder of 14 subunits composed of two heptameric rings stacked back-to-back. Interacts with the co-chaperonin GroES.

Its subcellular location is the cytoplasm. The enzyme catalyses ATP + H2O + a folded polypeptide = ADP + phosphate + an unfolded polypeptide.. Together with its co-chaperonin GroES, plays an essential role in assisting protein folding. The GroEL-GroES system forms a nano-cage that allows encapsulation of the non-native substrate proteins and provides a physical environment optimized to promote and accelerate protein folding. The polypeptide is Chaperonin GroEL (Neisseria meningitidis serogroup C (strain 053442)).